Reading from the N-terminus, the 478-residue chain is PRAME family member 27 (478 aa).

The stretch at 17–40 is one LRR 1 repeat; that stretch reads RSLLRDQALAMSTLEELPTELFPP. The LRR 1; degenerate repeat unit spans residues 99–126; the sequence is RWKLQVLDLQDVCENFWMVWSEAMARGS. Residues 181–205 form an LRR 2; degenerate repeat; sequence HLCCKKLKILGMPFRNIRSILKMVN. The LRR 3; degenerate repeat unit spans residues 206–232; the sequence is LDCIQEVEVNCKWVLPILTQFTPYLGH. One copy of the LRR 4; degenerate repeat lies at 233-268; the sequence is MRNLQKLVLSHMDVSRYVSPEQKKEIVTQFTTQFLK. LRR repeat units lie at residues 269–294, 295–326, 327–348, 351–378, and 379–403; these read LHCL…LSCL, KTSL…SQLK, TLDL…ILLE, AATL…ALSR, and CFEL…LLSH.

It belongs to the PRAME family.

This is PRAME family member 27 from Homo sapiens (Human).